A 191-amino-acid chain; its full sequence is MLGMIKNSLFGSVETWPWQVLSKGSKGDVFYEERACEGGKFATVEVTDKPVDEALREAMPKVMKYVGGSNDKGLGMGMTVPISFAVFPSDDGDLQKKLKVWFRIPNKFQSDPPAPSDDSIKIEDREGITVYSTQFGGYAKAADYAAQAAQLRSALESTAKYQTDFYFCTGYDPPMKPYGRRNEVWLVKSSE.

This sequence belongs to the HEBP family. Monomer.

It is found in the cytoplasm. Functionally, may bind free porphyrinogens that may be present in the cell and thus facilitate removal of these potentially toxic compound. Binds with a high affinity to one molecule of heme or porphyrins. It binds metalloporphyrins, free porphyrins and N-methylprotoporphyrin with similar affinities. The polypeptide is Heme-binding protein 1 (HEBP1) (Bos taurus (Bovine)).